A 187-amino-acid polypeptide reads, in one-letter code: UPF0301 protein VP2612 (187 aa).

It belongs to the UPF0301 (AlgH) family.

The polypeptide is UPF0301 protein VP2612 (Vibrio parahaemolyticus serotype O3:K6 (strain RIMD 2210633)).